We begin with the raw amino-acid sequence, 358 residues long: S-adenosylmethionine decarboxylase proenzyme (358 aa).

Active-site residues include E11 and E14. S71 serves as the catalytic Schiff-base intermediate with substrate; via pyruvic acid. S71 is subject to Pyruvic acid (Ser); by autocatalysis. Residue C85 is the Proton donor; for catalytic activity of the active site. Catalysis depends on proton acceptor; for processing activity residues S234 and H247.

It belongs to the eukaryotic AdoMetDC family. Pyruvate is required as a cofactor. Is synthesized initially as an inactive proenzyme. Formation of the active enzyme involves a self-maturation process in which the active site pyruvoyl group is generated from an internal serine residue via an autocatalytic post-translational modification. Two non-identical subunits are generated from the proenzyme in this reaction, and the pyruvate is formed at the N-terminus of the alpha chain, which is derived from the carboxyl end of the proenzyme. The post-translation cleavage follows an unusual pathway, termed non-hydrolytic serinolysis, in which the side chain hydroxyl group of the serine supplies its oxygen atom to form the C-terminus of the beta chain, while the remainder of the serine residue undergoes an oxidative deamination to produce ammonia and the pyruvoyl group blocking the N-terminus of the alpha chain.

It catalyses the reaction S-adenosyl-L-methionine + H(+) = S-adenosyl 3-(methylsulfanyl)propylamine + CO2. Its pathway is amine and polyamine biosynthesis; S-adenosylmethioninamine biosynthesis; S-adenosylmethioninamine from S-adenosyl-L-methionine: step 1/1. This chain is S-adenosylmethionine decarboxylase proenzyme (SAMDC), found in Solanum chilense (Tomato).